The primary structure comprises 91 residues: Transcription factor ILI3 (91 aa).

Residues 3 to 58 enclose the bHLH domain; the sequence is SRRGGGGGGGRITDEEINELISKLQALLPESSRSRGASRSSASKLLKETCSYIKSL.

This sequence belongs to the bHLH protein family.

In terms of biological role, atypical and probable non DNA-binding bHLH transcription that integrates multiple signaling pathways to regulate cell elongation and plant development. This chain is Transcription factor ILI3 (ILI3), found in Oryza sativa subsp. indica (Rice).